The following is a 183-amino-acid chain: Ribulose bisphosphate carboxylase small subunit, chloroplastic 3 (183 aa).

The transit peptide at Met1–Gln57 directs the protein to the chloroplast.

This sequence belongs to the RuBisCO small chain family. As to quaternary structure, heterohexadecamer of 8 large and 8 small subunits.

It is found in the plastid. It localises to the chloroplast. RuBisCO catalyzes two reactions: the carboxylation of D-ribulose 1,5-bisphosphate, the primary event in carbon dioxide fixation, as well as the oxidative fragmentation of the pentose substrate. Both reactions occur simultaneously and in competition at the same active site. Although the small subunit is not catalytic it is essential for maximal activity. This is Ribulose bisphosphate carboxylase small subunit, chloroplastic 3 from Mesembryanthemum crystallinum (Common ice plant).